The sequence spans 118 residues: Cell division protein SepF (118 aa).

The interval 1-12 is important for localization in a ring-like structure at midcell; that stretch reads MGIMSKILGGGG.

Homodimer. Does not oligomerize. Interacts with FtsZ2.

The protein resides in the cytoplasm. Its function is as follows. Involved in cell division. Probably acts as a membrane anchor for FstZ2, tethering its filaments to the division site. May be involved in septum closure. The polypeptide is Cell division protein SepF (Haloferax volcanii (strain ATCC 29605 / DSM 3757 / JCM 8879 / NBRC 14742 / NCIMB 2012 / VKM B-1768 / DS2) (Halobacterium volcanii)).